A 702-amino-acid polypeptide reads, in one-letter code: Lipase maturation factor 2 (702 aa).

The next 10 membrane-spanning stretches (helical) occupy residues 10-30 (LFLQ…YTQI), 75-95 (AQGL…ALLL), 102-122 (FIYL…QVFL), 123-143 (YFQW…VAPL), 164-184 (DLPF…SGVV), 226-246 (LSVV…FAPI), 259-279 (LLQI…LTLV), 316-336 (LMLE…YFGL), 363-383 (VTLP…LIAL), and 396-416 (FFAG…FLIS). Asn488 is a glycosylation site (N-linked (GlcNAc...) asparagine). A helical membrane pass occupies residues 628–648 (QLSPLEPSILLWGLLGAVVAI). A disordered region spans residues 660 to 702 (LQSSKQTREEKRKQAPKKDSRAVSEQTAPNSNSNGSWAPRRKK). Residues 665 to 681 (QTREEKRKQAPKKDSRA) are compositionally biased toward basic and acidic residues. Positions 682–695 (VSEQTAPNSNSNGS) are enriched in polar residues.

This sequence belongs to the lipase maturation factor family.

It localises to the endoplasmic reticulum membrane. Functionally, involved in the maturation of specific proteins in the endoplasmic reticulum. May be required for maturation and transport of active lipoprotein lipase (LPL) through the secretory pathway. The protein is Lipase maturation factor 2 (Lmf2) of Rattus norvegicus (Rat).